A 395-amino-acid chain; its full sequence is Phosphoglycerate kinase (395 aa).

Substrate is bound by residues 20-22 (DFN), Arg36, 59-62 (HLGR), Arg120, and Arg157. Residues Lys208, Gly296, Glu327, and 353-356 (GGDT) each bind ATP.

The protein belongs to the phosphoglycerate kinase family. As to quaternary structure, monomer.

It localises to the cytoplasm. It catalyses the reaction (2R)-3-phosphoglycerate + ATP = (2R)-3-phospho-glyceroyl phosphate + ADP. The protein operates within carbohydrate degradation; glycolysis; pyruvate from D-glyceraldehyde 3-phosphate: step 2/5. The chain is Phosphoglycerate kinase from Tropheryma whipplei (strain TW08/27) (Whipple's bacillus).